The primary structure comprises 477 residues: Epoxyalcohol synthase CYP5164B1 (477 aa).

Cysteine 421 provides a ligand contact to heme.

Belongs to the cytochrome P450 family. The cofactor is heme.

It carries out the reaction (9S)-hydroperoxy-(10E,12Z)-octadecadienoate = (11S)-hydroxy-(9S,10S)-epoxy-(12Z)-octadecenoate. It catalyses the reaction (13S)-hydroperoxy-(9Z,11E)-octadecadienoate = 11-hydroxy-12,13-epoxy-(9Z)-octadecenoate. Its pathway is lipid metabolism; oxylipin biosynthesis. Functionally, cytochrome P450 epoxyalcohol synthase involved in the metabolism of oxylipins 'ectocarpins' natural products, such as hybridalactone, ecklonilactones and derivatives. Isomerizes the hydroperoxides into epoxyalcohols via epoxyallylic radical. Can use linoleic acid 9-hydroperoxide ((9S,10E,12Z)-9-hydroperoxy-10,12-octadecadienoic, 9-HPOD) as preferred substrate to produce (9S,10S,11S,12Z)-9,10-epoxy-11-hydroxy-12-octadecenoic acid and, to a lower extent, active with linoleate 13-hydroperoxide ((9Z,11E,13S)-13-hydroperoxy-9,11-octadecadienoic, 13-HPOD) to produce 11-hydroxy-12,13-epoxy-9-octadecenoic acid. No activity toward alpha-linolenic acid 9- and 13-hydroperoxides, and toward eicosapentaenoic acid 15-hydroperoxide. The polypeptide is Epoxyalcohol synthase CYP5164B1 (Ectocarpus siliculosus (Brown alga)).